The primary structure comprises 367 residues: Peptide chain release factor 1 (367 aa).

Position 238 is an N5-methylglutamine (Gln238).

The protein belongs to the prokaryotic/mitochondrial release factor family. Methylated by PrmC. Methylation increases the termination efficiency of RF1.

It localises to the cytoplasm. Its function is as follows. Peptide chain release factor 1 directs the termination of translation in response to the peptide chain termination codons UAG and UAA. The polypeptide is Peptide chain release factor 1 (Dictyoglomus turgidum (strain DSM 6724 / Z-1310)).